The following is a 271-amino-acid chain: Nus factor SuhB (271 aa).

The Mg(2+) site is built by glutamate 67, aspartate 86, and leucine 88. Glutamate 67 is a binding site for substrate. Residues 88–91 (LDGT), arginine 187, and aspartate 216 contribute to the substrate site.

It belongs to the inositol monophosphatase superfamily. Homodimer. The rRNA transcription and antitermination complex (rrnTAC) consists of RNA polymerase (RNAP), NusA, NusB, NusE (rpsJ), NusG, SubB, ribosomal protein S4, DNA and precursor rRNA; S4 is more flexible than other subunits. Interacts with the ribosome and with RNA polymerase. The cofactor is Mg(2+).

It localises to the cytoplasm. It catalyses the reaction a myo-inositol phosphate + H2O = myo-inositol + phosphate. In terms of biological role, part of the processive rRNA transcription and antitermination complex (rrnTAC). The complex forms an RNA-chaperone ring around the RNA exit tunnel of RNA polymerase (RNAP). It supports rapid transcription and antitermination of rRNA operons, cotranscriptional rRNA folding, and annealing of distal rRNA regions to allow correct ribosome biogenesis. This subunit may play a central role in organizing the structure. A ribosome-associated protein, deletion of which alters the expression of 494 genes, suggesting a role in global gene regulation. Involved in control of pathogenesis-related genes. Required for the activation of virulence factors associated with acute infections (type 3 secretion system, T3SS) while suppressing virulence factors associated with chronic infections (biofilm formation and type 6 secretion system, T6SS). It probably acts at a post-transcriptional level. This chain is Nus factor SuhB, found in Pseudomonas aeruginosa (strain ATCC 15692 / DSM 22644 / CIP 104116 / JCM 14847 / LMG 12228 / 1C / PRS 101 / PAO1).